Here is a 519-residue protein sequence, read N- to C-terminus: Cyclic AMP-responsive element-binding protein 3-like protein 1 (519 aa).

Positions 1 to 60 (MDAVLEPFPADRLFPGSSFLDLGDLNESDFLNNAHFPEHLDHFVENMEDFSNDLFSSFFD) are required for transcription activation. The Cytoplasmic portion of the chain corresponds to 1–376 (MDAVLEPFPA…MAATQTGTCL (376 aa)). A Glycyl lysine isopeptide (Lys-Gly) (interchain with G-Cter in SUMO2) cross-link involves residue lysine 184. The interval 200 to 259 (DLVQMPPTPPSSHGSDSDGSQSPRSLPPSSPVRPMARSSTAISTSPLLTAPHKLQGTSGP) is disordered. Residues 210–223 (SSHGSDSDGSQSPR) show a composition bias toward low complexity. Residues 236–246 (RSSTAISTSPL) show a composition bias toward polar residues. Residues 290–353 (ALKRVRRKIK…RTLLQQLQKL (64 aa)) enclose the bZIP domain. A basic motif region spans residues 292 to 321 (KRVRRKIKNKISAQESRRKKKEYVECLEKK). The segment at 332–353 (LWKKVETLETANRTLLQQLQKL) is leucine-zipper. The chain crosses the membrane as a helical; Signal-anchor for type II membrane protein span at residues 377 to 397 (MVAALCFVLVLGSLVPCLPAF). Residues 392–395 (PCLP) carry the S2P recognition motif. Residues 398-519 (SSGSMTVKED…LGPNTTIKLS (122 aa)) lie on the Lumenal side of the membrane. Residues 423 to 426 (RSLL) carry the S1P recognition motif. Residues 449-519 (EGWELKPGGP…LGPNTTIKLS (71 aa)) are disordered. Positions 462–486 (RPQDHLRHDRADSIHETTKYLRETW) are enriched in basic and acidic residues. Asparagine 493, asparagine 498, and asparagine 513 each carry an N-linked (GlcNAc...) asparagine glycan.

The protein belongs to the bZIP family. ATF subfamily. Interacts with SMAD4, the interaction takes place upon TGFB1 induction and SMAD4 acts as a CREB3L1 coactivator to induce the expression of genes involved in assembly of collagen extracellular matrix. In terms of processing, N-glycosylated. Post-translationally, ubiquitinated by HRD1/SYVN1; undergoes 'Lys-48'-linked ubiquitination, followed by rapid proteasomal degradation under normal conditions. Upon ER stress, SYVN1 E3 ubiquitin-protein ligase dissociates from its substrate, ubiquitination does not occur and CREB3L1 is stabilized. Upon ER stress or DNA damage, translocated to the Golgi apparatus, where it is processed by regulated intramembrane proteolysis (RIP) to release the cytosol-facing N-terminal transcription factor domain. The cleavage is performed sequentially by site-1 and site-2 proteases (S1P/MBTPS1 and S2P/MBTPS2). RIP is induced by TGFB1 and ceramide. In terms of tissue distribution, expressed in cortical and trabecular bones. Highly expressed in osteoblasts, but not detected in osteoclasts, nor in macrophages. Expressed at relatively low levels in lung and kidney. Weakly expressed in brain and spleen. Expressed in astrocytes.

It is found in the endoplasmic reticulum membrane. It localises to the nucleus. In terms of biological role, precursor of the transcription factor form (Processed cyclic AMP-responsive element-binding protein 3-like protein 1), which is embedded in the endoplasmic reticulum membrane with N-terminal DNA-binding and transcription activation domains oriented toward the cytosolic face of the membrane. In response to ER stress or DNA damage, transported to the Golgi, where it is cleaved in a site-specific manner by resident proteases S1P/MBTPS1 and S2P/MBTPS2. The released N-terminal cytosolic domain is translocated to the nucleus where it activates transcription of specific target genes involved in the cell-cycle progression inhibition. Its function is as follows. Transcription factor involved in cell type specific DNA damage and unfolded protein response (UPR). Binds the DNA consensus sequence 5'-GTGXGCXGC-3'. Plays a critical role in bone formation through the transcription of COL1A1, and possibly COL1A2, and the secretion of bone matrix proteins. Directly binds to the UPR element (UPRE)-like sequence in an osteoblast-specific COL1A1 promoter region and induces its transcription. Does not regulate COL1A1 in other tissues, such as skin. Required to protect astrocytes from ER stress-induced cell death. In astrocytes, binds to the cAMP response element (CRE) of the BiP/HSPA5 promoter and participate in its transcriptional activation. In astrocytes and osteoblasts, upon DNA damage, inhibits cell-cycle progression after G2/M phase by binding to promoters and activating transcription of genes encoding cell-cycle inhibitors, such as p21/CDKN1A. Required for TGFB1 to activate genes involved in the assembly of collagen extracellular matrix. The chain is Cyclic AMP-responsive element-binding protein 3-like protein 1 (Creb3l1) from Mus musculus (Mouse).